A 135-amino-acid chain; its full sequence is Large ribosomal subunit protein bL21 (135 aa).

The tract at residues 114 to 135 (EAEKETPVLDETPAEEVETAAE) is disordered. Acidic residues predominate over residues 125–135 (TPAEEVETAAE).

It belongs to the bacterial ribosomal protein bL21 family. As to quaternary structure, part of the 50S ribosomal subunit. Contacts protein L20.

Functionally, this protein binds to 23S rRNA in the presence of protein L20. This is Large ribosomal subunit protein bL21 from Nostoc punctiforme (strain ATCC 29133 / PCC 73102).